The chain runs to 198 residues: Probable GTP-binding protein EngB (198 aa).

One can recognise an EngB-type G domain in the interval 36 to 198; the sequence is SDPQFAFIGR…NLSKLQELLE (163 aa). Residues 44–51, 70–74, 88–91, 155–158, and 182–184 contribute to the GTP site; these read GRSNVGKS, GRTQL, DLPG, NKID, and ISA. 2 residues coordinate Mg(2+): Ser-51 and Thr-72.

Belongs to the TRAFAC class TrmE-Era-EngA-EngB-Septin-like GTPase superfamily. EngB GTPase family. It depends on Mg(2+) as a cofactor.

Necessary for normal cell division and for the maintenance of normal septation. This is Probable GTP-binding protein EngB from Mesomycoplasma hyopneumoniae (strain 7448) (Mycoplasma hyopneumoniae).